A 389-amino-acid chain; its full sequence is G2/M cell-cycle inhibitor DR6 (389 aa).

It belongs to the Roseolovirus DR6 family.

It is found in the host nucleus. Functionally, inhibits the host G2/M cell-cycle progression in a p53-independent manner. The sequence is that of G2/M cell-cycle inhibitor DR6 (DR6L) from Homo sapiens (Human).